Consider the following 546-residue polypeptide: Phosphoglucomutase (546 aa).

S135 serves as the catalytic Phosphoserine intermediate. The Mg(2+) site is built by S135, D288, D290, and D292.

It belongs to the phosphohexose mutase family. Mg(2+) serves as cofactor.

It catalyses the reaction alpha-D-glucose 1-phosphate = alpha-D-glucose 6-phosphate. Its pathway is glycolipid metabolism; diglucosyl-diacylglycerol biosynthesis. Its function is as follows. Catalyzes the interconversion between glucose-6-phosphate and alpha-glucose-1-phosphate. This is the first step in the biosynthesis of diglucosyl-diacylglycerol (Glc2-DAG), i.e. a glycolipid found in the membrane, which is also used as a membrane anchor for lipoteichoic acid (LTA). The polypeptide is Phosphoglucomutase (pgcA) (Staphylococcus epidermidis (strain ATCC 35984 / DSM 28319 / BCRC 17069 / CCUG 31568 / BM 3577 / RP62A)).